We begin with the raw amino-acid sequence, 376 residues long: Glucose-1-phosphate adenylyltransferase (376 aa).

Alpha-D-glucose 1-phosphate contacts are provided by residues Tyr-101, Gly-166, 181 to 182, and Ser-192; that span reads EK.

It belongs to the bacterial/plant glucose-1-phosphate adenylyltransferase family. As to quaternary structure, homotetramer.

It carries out the reaction alpha-D-glucose 1-phosphate + ATP + H(+) = ADP-alpha-D-glucose + diphosphate. It functions in the pathway glycan biosynthesis; glycogen biosynthesis. In terms of biological role, involved in the biosynthesis of ADP-glucose, a building block required for the elongation reactions to produce glycogen. Catalyzes the reaction between ATP and alpha-D-glucose 1-phosphate (G1P) to produce pyrophosphate and ADP-Glc. This is Glucose-1-phosphate adenylyltransferase from Bacillus cereus (strain ZK / E33L).